Here is a 483-residue protein sequence, read N- to C-terminus: Succinate semialdehyde dehydrogenase (483 aa).

Residues 156-157, 180-183, and 233-234 contribute to the NAD(+) site; these read WN, KPAP, and GS. Glutamate 255 acts as the Proton acceptor in catalysis. Leucine 256 lines the NAD(+) pocket. Cysteine 289 functions as the Nucleophile in the catalytic mechanism. Glutamate 386 lines the NAD(+) pocket.

Belongs to the aldehyde dehydrogenase family. As to quaternary structure, homotetramer.

It carries out the reaction succinate semialdehyde + NAD(+) + H2O = succinate + NADH + 2 H(+). In terms of biological role, involved in the degradation of the pyridine ring of trigonelline (TG; N-methylnicotinate) into succinate and methylamine as carbon and nitrogen sources, respectively. Catalyzes the NAD(+)-dependent oxidation of succinate semialdehyde to succinate. The sequence is that of Succinate semialdehyde dehydrogenase from Acinetobacter baylyi (strain ATCC 33305 / BD413 / ADP1).